We begin with the raw amino-acid sequence, 460 residues long: MTNYAIILAAGKGTRMTSDLPKVLHKVSGLTMLEHVFRSVKAISPEKAVTVIGHKSEKVRAVLADQSAFVHQTEQLGTGHAVMMAETQLEGLEGHTLVIAGDTPLITGESLKSLIDFHVNHKNVATILTATAQDPFGYGRIVRNKDGEVIKIVEQKDANEYEQQLKEINTGTYVFDNKRLFEALKCITTNNAQGEYYLTDVVAIFRANKEKVGAYILRDFNESLGVNDRVALATAETVMRQRITQKHMVNGVTFQNPETVYIESDVEIAPDVLIEGNVTLKGRTHIGSGTVLTNGTYIVDSEIGQGSIITNSMIESSVLAAGVTVGPYAHLRPGTTLGREVHIGNFVEVKGSHIGEKTKAGHLTYIGNAQVGSSVNVGAGTITVNYDGQNKYETVIGDHAFIGSNSTLIAPLEVGDNALTAAGSTISKTVPADSIVIGRSRQVTKEGYAKRLAHHPSRSK.

Residues 1–229 (MTNYAIILAA…FNESLGVNDR (229 aa)) form a pyrophosphorylase region. Residues 8–11 (LAAG), lysine 22, glutamine 72, and 77–78 (GT) contribute to the UDP-N-acetyl-alpha-D-glucosamine site. Aspartate 102 lines the Mg(2+) pocket. Residues glycine 139, glutamate 154, asparagine 169, and asparagine 227 each contribute to the UDP-N-acetyl-alpha-D-glucosamine site. Asparagine 227 is a Mg(2+) binding site. The linker stretch occupies residues 230–250 (VALATAETVMRQRITQKHMVN). Positions 251–460 (GVTFQNPETV…RLAHHPSRSK (210 aa)) are N-acetyltransferase. Positions 332 and 350 each coordinate UDP-N-acetyl-alpha-D-glucosamine. The active-site Proton acceptor is the histidine 362. UDP-N-acetyl-alpha-D-glucosamine contacts are provided by tyrosine 365 and asparagine 376. Acetyl-CoA-binding positions include alanine 379, 385-386 (NY), serine 404, alanine 422, and arginine 439.

The protein in the N-terminal section; belongs to the N-acetylglucosamine-1-phosphate uridyltransferase family. This sequence in the C-terminal section; belongs to the transferase hexapeptide repeat family. As to quaternary structure, homotrimer. It depends on Mg(2+) as a cofactor.

Its subcellular location is the cytoplasm. It catalyses the reaction alpha-D-glucosamine 1-phosphate + acetyl-CoA = N-acetyl-alpha-D-glucosamine 1-phosphate + CoA + H(+). The enzyme catalyses N-acetyl-alpha-D-glucosamine 1-phosphate + UTP + H(+) = UDP-N-acetyl-alpha-D-glucosamine + diphosphate. It functions in the pathway nucleotide-sugar biosynthesis; UDP-N-acetyl-alpha-D-glucosamine biosynthesis; N-acetyl-alpha-D-glucosamine 1-phosphate from alpha-D-glucosamine 6-phosphate (route II): step 2/2. The protein operates within nucleotide-sugar biosynthesis; UDP-N-acetyl-alpha-D-glucosamine biosynthesis; UDP-N-acetyl-alpha-D-glucosamine from N-acetyl-alpha-D-glucosamine 1-phosphate: step 1/1. It participates in bacterial outer membrane biogenesis; LPS lipid A biosynthesis. Catalyzes the last two sequential reactions in the de novo biosynthetic pathway for UDP-N-acetylglucosamine (UDP-GlcNAc). The C-terminal domain catalyzes the transfer of acetyl group from acetyl coenzyme A to glucosamine-1-phosphate (GlcN-1-P) to produce N-acetylglucosamine-1-phosphate (GlcNAc-1-P), which is converted into UDP-GlcNAc by the transfer of uridine 5-monophosphate (from uridine 5-triphosphate), a reaction catalyzed by the N-terminal domain. The chain is Bifunctional protein GlmU from Streptococcus pyogenes serotype M12 (strain MGAS9429).